Here is a 281-residue protein sequence, read N- to C-terminus: Glutamate racemase (281 aa).

Residues 10-11 and 42-43 each bind substrate; these read DS and YG. Catalysis depends on Cys-74, which acts as the Proton donor/acceptor. Position 75 to 76 (75 to 76) interacts with substrate; sequence NT. The active-site Proton donor/acceptor is Cys-190. Residue 191–192 participates in substrate binding; it reads TH.

Belongs to the aspartate/glutamate racemases family.

The catalysed reaction is L-glutamate = D-glutamate. It functions in the pathway cell wall biogenesis; peptidoglycan biosynthesis. Functionally, provides the (R)-glutamate required for cell wall biosynthesis. The protein is Glutamate racemase of Oenococcus oeni (strain ATCC BAA-331 / PSU-1).